We begin with the raw amino-acid sequence, 263 residues long: Small ribosomal subunit protein uS2 (263 aa).

The protein belongs to the universal ribosomal protein uS2 family.

The sequence is that of Small ribosomal subunit protein uS2 from Hyphomonas neptunium (strain ATCC 15444).